The chain runs to 376 residues: N6-methyladenosine RNA methyltransferase MTA1 (376 aa).

Residues 53 to 78 (TRRLISSPPPETPFVTPEPKNGPSPL) are disordered.

This sequence belongs to the MT-A70-like family.

It catalyses the reaction an adenosine in mRNA + S-adenosyl-L-methionine = an N(6)-methyladenosine in mRNA + S-adenosyl-L-homocysteine + H(+). Its function is as follows. N6-methyladenosine RNA methyltransferase that plays a crucial role in fungal phenotypic traits, virulence, and stress tolerance. Mediates the methylation of mRNAs to produce N6-methyladenosine (m6A)-containing mRNAs. M6A is a modification present at internal sites of mRNAs and some non-coding RNAs and plays a role in mRNA stability and processing. Required for appressorium turgor pressure and regulates autophagosome formation during appressorium formation stage. Specifically, mediates the stability of ATG8 mRNA in a m6A-dependent manner via modification of the m6A site A982 located in 3'UTR region. The polypeptide is N6-methyladenosine RNA methyltransferase MTA1 (Pyricularia oryzae (strain 70-15 / ATCC MYA-4617 / FGSC 8958) (Rice blast fungus)).